The chain runs to 181 residues: NADH-quinone oxidoreductase subunit I 2 (181 aa).

2 4Fe-4S ferredoxin-type domains span residues 44 to 74 (LNRYPDGLEKCIGCELCAWACPADAIYVEGA) and 90 to 119 (RVYQINYLRCIGCGLCVEACPTRALTMTND). [4Fe-4S] cluster-binding residues include Cys54, Cys57, Cys60, Cys64, Cys99, Cys102, Cys105, and Cys109.

Belongs to the complex I 23 kDa subunit family. In terms of assembly, NDH-1 is composed of 14 different subunits. Subunits NuoA, H, J, K, L, M, N constitute the membrane sector of the complex. [4Fe-4S] cluster is required as a cofactor.

Its subcellular location is the cell membrane. The enzyme catalyses a quinone + NADH + 5 H(+)(in) = a quinol + NAD(+) + 4 H(+)(out). Functionally, NDH-1 shuttles electrons from NADH, via FMN and iron-sulfur (Fe-S) centers, to quinones in the respiratory chain. The immediate electron acceptor for the enzyme in this species is believed to be menaquinone. Couples the redox reaction to proton translocation (for every two electrons transferred, four hydrogen ions are translocated across the cytoplasmic membrane), and thus conserves the redox energy in a proton gradient. This is NADH-quinone oxidoreductase subunit I 2 from Mycolicibacterium paratuberculosis (strain ATCC BAA-968 / K-10) (Mycobacterium paratuberculosis).